We begin with the raw amino-acid sequence, 511 residues long: Restriction of telomere capping protein 5 (511 aa).

The TLDc domain maps to 274-499; the sequence is AILSPLIHAQ…IQDLEVIGVD (226 aa).

This sequence belongs to the RTC5 family.

The protein resides in the cytoplasm. Its subcellular location is the nucleus. May be involved in a process influencing telomere capping. This Schizosaccharomyces pombe (strain 972 / ATCC 24843) (Fission yeast) protein is Restriction of telomere capping protein 5 (rtc5).